We begin with the raw amino-acid sequence, 450 residues long: Tubulin alpha-5 chain (450 aa).

GTP contacts are provided by Q11, E71, G144, T145, T179, N206, and N228. E71 lines the Mg(2+) pocket. E254 is a catalytic residue. T349 is modified (phosphothreonine). Residues 429–450 are disordered; that stretch reads EKDYEEVGAEGGDDEEDEGEDY. Residues 431–450 show a composition bias toward acidic residues; it reads DYEEVGAEGGDDEEDEGEDY.

It belongs to the tubulin family. Dimer of alpha and beta chains. A typical microtubule is a hollow water-filled tube with an outer diameter of 25 nm and an inner diameter of 15 nM. Alpha-beta heterodimers associate head-to-tail to form protofilaments running lengthwise along the microtubule wall with the beta-tubulin subunit facing the microtubule plus end conferring a structural polarity. Microtubules usually have 13 protofilaments but different protofilament numbers can be found in some organisms and specialized cells. Requires Mg(2+) as cofactor. In terms of processing, undergoes a tyrosination/detyrosination cycle, the cyclic removal and re-addition of a C-terminal tyrosine residue by the enzymes tubulin tyrosine carboxypeptidase (TTCP) and tubulin tyrosine ligase (TTL), respectively.

It localises to the cytoplasm. It is found in the cytoskeleton. It catalyses the reaction GTP + H2O = GDP + phosphate + H(+). Functionally, tubulin is the major constituent of microtubules, a cylinder consisting of laterally associated linear protofilaments composed of alpha- and beta-tubulin heterodimers. Microtubules grow by the addition of GTP-tubulin dimers to the microtubule end, where a stabilizing cap forms. Below the cap, tubulin dimers are in GDP-bound state, owing to GTPase activity of alpha-tubulin. This chain is Tubulin alpha-5 chain (TUBA5), found in Arabidopsis thaliana (Mouse-ear cress).